Consider the following 335-residue polypeptide: Nonaprenyl diphosphate synthase (335 aa).

Lys-57, Arg-60, and His-90 together coordinate isopentenyl diphosphate. Residues Asp-97 and Asp-101 each coordinate Mg(2+). Residues 97–101 (DDVMD) carry the DDXXD motif motif. Arg-107 contributes to the isopentenyl diphosphate binding site. The short motif at 223 to 227 (DDIID) is the DDXXD motif element.

The protein belongs to the FPP/GGPP synthase family. Mg(2+) serves as cofactor.

The enzyme catalyses isopentenyl diphosphate + (2E)-geranyl diphosphate = (2E,6E)-farnesyl diphosphate + diphosphate. It catalyses the reaction isopentenyl diphosphate + (2E,6E)-farnesyl diphosphate = (2E,6E,10E)-geranylgeranyl diphosphate + diphosphate. It carries out the reaction 5 isopentenyl diphosphate + (2E,6E,10E)-geranylgeranyl diphosphate = all-trans-nonaprenyl diphosphate + 5 diphosphate. The protein operates within isoprenoid biosynthesis; farnesyl diphosphate biosynthesis; farnesyl diphosphate from geranyl diphosphate and isopentenyl diphosphate. It functions in the pathway isoprenoid biosynthesis; geranylgeranyl diphosphate biosynthesis; geranylgeranyl diphosphate from farnesyl diphosphate and isopentenyl diphosphate: step 1/1. Catalyzes the sequential condensations of isopentenyl pyrophosphate (IPP) with geranyl diphosphate (GPP) to yield (2E,6E)-farnesyl diphosphate (E,E-FPP), with E,E-FPP to yield geranylgeranyl diphosphate (GGPP) and with GGPP to yield nonaprenyl diphosphate. May also have weak activity with dimethylallyl diphosphate (DMAPP). The protein is Nonaprenyl diphosphate synthase of Mycobacterium tuberculosis (strain ATCC 25618 / H37Rv).